A 184-amino-acid polypeptide reads, in one-letter code: Large ribosomal subunit protein uL15 (184 aa).

The segment at 1–45 (MNLSSLRPAKGSVRNKKRVGRGQGSGNGTTAGKGNKGQQARSGYK) is disordered. The segment covering 21–35 (RGQGSGNGTTAGKGN) has biased composition (gly residues).

It belongs to the universal ribosomal protein uL15 family. Part of the 50S ribosomal subunit.

Its function is as follows. Binds to the 23S rRNA. The polypeptide is Large ribosomal subunit protein uL15 (Chlorobium chlorochromatii (strain CaD3)).